A 953-amino-acid chain; its full sequence is Valine--tRNA ligase (953 aa).

The 'HIGH' region signature appears at 42 to 52 (PNVTGSLHMGH). The short motif at 554–558 (KMSKS) is the 'KMSKS' region element. Lysine 557 serves as a coordination point for ATP. The stretch at 884–952 (LIDKDAELDR…LEQQKATIAA (69 aa)) forms a coiled coil.

It belongs to the class-I aminoacyl-tRNA synthetase family. ValS type 1 subfamily. In terms of assembly, monomer.

It is found in the cytoplasm. It catalyses the reaction tRNA(Val) + L-valine + ATP = L-valyl-tRNA(Val) + AMP + diphosphate. Its function is as follows. Catalyzes the attachment of valine to tRNA(Val). As ValRS can inadvertently accommodate and process structurally similar amino acids such as threonine, to avoid such errors, it has a 'posttransfer' editing activity that hydrolyzes mischarged Thr-tRNA(Val) in a tRNA-dependent manner. The chain is Valine--tRNA ligase from Vibrio cholerae serotype O1 (strain ATCC 39315 / El Tor Inaba N16961).